Here is a 436-residue protein sequence, read N- to C-terminus: Histone acetyltransferase type B subunit 2 (436 aa).

Over residues 1–19 the composition is skewed to acidic residues; it reads MEPYDDGFIEEQEEQEEER. Residues 1-22 form a disordered region; the sequence is MEPYDDGFIEEQEEQEEERTEE. WD repeat units lie at residues 136–176, 187–227, 237–277, 284–324, and 328–368; these read DHKG…SLPT, GHTK…KGNK, HHSS…TTRA, QHRD…TKLH, and CHTD…EEQT. The tract at residues 370 to 374 is interaction with the histone H4 N-terminus; sequence DDAQD. A WD 6 repeat occupies 385 to 425; it reads GHTNRISDFSWNLNDPWVLCSAAEDNLLQVWKVADAIVGKD.

This sequence belongs to the WD repeat RBAP46/RBAP48/MSI1 family. In terms of assembly, component of the HAT-B complex composed of at least hat1 and hat2. The HAT-B complex binds to histone H4 tail.

It is found in the cytoplasm. Its subcellular location is the nucleus. In terms of biological role, regulatory subunit of the histone acetylase B (HAT-B) complex. The complex acetylates 'Lys-12' of histone H4 which is required for telomeric silencing. This chain is Histone acetyltransferase type B subunit 2 (hat2), found in Aspergillus oryzae (strain ATCC 42149 / RIB 40) (Yellow koji mold).